The following is a 382-amino-acid chain: D-alanine--D-alanine ligase (382 aa).

The ATP-grasp domain maps to K161–H372. Residue V193–E248 participates in ATP binding. Mg(2+) contacts are provided by D326, E339, and N341.

The protein belongs to the D-alanine--D-alanine ligase family. The cofactor is Mg(2+). Mn(2+) is required as a cofactor.

Its subcellular location is the cytoplasm. It catalyses the reaction 2 D-alanine + ATP = D-alanyl-D-alanine + ADP + phosphate + H(+). It functions in the pathway cell wall biogenesis; peptidoglycan biosynthesis. Functionally, cell wall formation. In Pseudarthrobacter chlorophenolicus (strain ATCC 700700 / DSM 12829 / CIP 107037 / JCM 12360 / KCTC 9906 / NCIMB 13794 / A6) (Arthrobacter chlorophenolicus), this protein is D-alanine--D-alanine ligase.